The chain runs to 620 residues: 1-deoxy-D-xylulose-5-phosphate synthase (620 aa).

Thiamine diphosphate is bound by residues His-80 and 121 to 123 (GHS). A Mg(2+)-binding site is contributed by Asp-152. Thiamine diphosphate contacts are provided by residues 153–154 (GA), Asn-181, Tyr-288, and Glu-370. Asn-181 provides a ligand contact to Mg(2+).

This sequence belongs to the transketolase family. DXPS subfamily. Homodimer. The cofactor is Mg(2+). Requires thiamine diphosphate as cofactor.

The catalysed reaction is D-glyceraldehyde 3-phosphate + pyruvate + H(+) = 1-deoxy-D-xylulose 5-phosphate + CO2. Its pathway is metabolic intermediate biosynthesis; 1-deoxy-D-xylulose 5-phosphate biosynthesis; 1-deoxy-D-xylulose 5-phosphate from D-glyceraldehyde 3-phosphate and pyruvate: step 1/1. In terms of biological role, catalyzes the acyloin condensation reaction between C atoms 2 and 3 of pyruvate and glyceraldehyde 3-phosphate to yield 1-deoxy-D-xylulose-5-phosphate (DXP). The protein is 1-deoxy-D-xylulose-5-phosphate synthase of Shigella flexneri.